A 320-amino-acid polypeptide reads, in one-letter code: 4-hydroxy-3-methylbut-2-enyl diphosphate reductase (320 aa).

Cysteine 13 is a binding site for [4Fe-4S] cluster. The (2E)-4-hydroxy-3-methylbut-2-enyl diphosphate site is built by histidine 41 and histidine 75. Residues histidine 41 and histidine 75 each contribute to the dimethylallyl diphosphate site. Residues histidine 41 and histidine 75 each coordinate isopentenyl diphosphate. Cysteine 97 is a [4Fe-4S] cluster binding site. A (2E)-4-hydroxy-3-methylbut-2-enyl diphosphate-binding site is contributed by histidine 125. Residue histidine 125 coordinates dimethylallyl diphosphate. Position 125 (histidine 125) interacts with isopentenyl diphosphate. Glutamate 127 serves as the catalytic Proton donor. A (2E)-4-hydroxy-3-methylbut-2-enyl diphosphate-binding site is contributed by threonine 168. Cysteine 225 provides a ligand contact to [4Fe-4S] cluster. (2E)-4-hydroxy-3-methylbut-2-enyl diphosphate is bound by residues serine 253, serine 254, asparagine 255, and serine 302. Positions 253, 254, 255, and 302 each coordinate dimethylallyl diphosphate. Isopentenyl diphosphate-binding residues include serine 253, serine 254, asparagine 255, and serine 302.

This sequence belongs to the IspH family. [4Fe-4S] cluster serves as cofactor.

The enzyme catalyses isopentenyl diphosphate + 2 oxidized [2Fe-2S]-[ferredoxin] + H2O = (2E)-4-hydroxy-3-methylbut-2-enyl diphosphate + 2 reduced [2Fe-2S]-[ferredoxin] + 2 H(+). It carries out the reaction dimethylallyl diphosphate + 2 oxidized [2Fe-2S]-[ferredoxin] + H2O = (2E)-4-hydroxy-3-methylbut-2-enyl diphosphate + 2 reduced [2Fe-2S]-[ferredoxin] + 2 H(+). It participates in isoprenoid biosynthesis; dimethylallyl diphosphate biosynthesis; dimethylallyl diphosphate from (2E)-4-hydroxy-3-methylbutenyl diphosphate: step 1/1. Its pathway is isoprenoid biosynthesis; isopentenyl diphosphate biosynthesis via DXP pathway; isopentenyl diphosphate from 1-deoxy-D-xylulose 5-phosphate: step 6/6. Its function is as follows. Catalyzes the conversion of 1-hydroxy-2-methyl-2-(E)-butenyl 4-diphosphate (HMBPP) into a mixture of isopentenyl diphosphate (IPP) and dimethylallyl diphosphate (DMAPP). Acts in the terminal step of the DOXP/MEP pathway for isoprenoid precursor biosynthesis. This Chlorobium luteolum (strain DSM 273 / BCRC 81028 / 2530) (Pelodictyon luteolum) protein is 4-hydroxy-3-methylbut-2-enyl diphosphate reductase.